The primary structure comprises 183 residues: Large ribosomal subunit protein uL5 (183 aa).

It belongs to the universal ribosomal protein uL5 family. As to quaternary structure, part of the 50S ribosomal subunit; part of the 5S rRNA/L5/L18/L25 subcomplex. Contacts the 5S rRNA and the P site tRNA. Forms a bridge to the 30S subunit in the 70S ribosome.

This is one of the proteins that bind and probably mediate the attachment of the 5S RNA into the large ribosomal subunit, where it forms part of the central protuberance. In the 70S ribosome it contacts protein S13 of the 30S subunit (bridge B1b), connecting the 2 subunits; this bridge is implicated in subunit movement. Contacts the P site tRNA; the 5S rRNA and some of its associated proteins might help stabilize positioning of ribosome-bound tRNAs. In Chlorobaculum tepidum (strain ATCC 49652 / DSM 12025 / NBRC 103806 / TLS) (Chlorobium tepidum), this protein is Large ribosomal subunit protein uL5.